Here is a 249-residue protein sequence, read N- to C-terminus: Fatty acid elongase 5 (249 aa).

3 helical membrane-spanning segments follow: residues 23 to 43, 68 to 88, and 100 to 120; these read VFVNYPVLIGCHIGYLVVIVL, VALSLVMAINLGQFLVYGVFN, and WIFVHYATKFLDMFDTYFIVL. The HxxHH motif motif lies at 131-135; that stretch reads HIYHH. H134 (nucleophile) is an active-site residue. 4 consecutive transmembrane segments (helical) span residues 138-158, 159-179, 193-213, and 217-236; these read IGFIWGLLLHHGVANGTAFFG, AWINSAVHALMYFHYLYTSLG, MIQFALCILHAVLAVVAHSPI, and WAVLQLCYHLTLLYLFMRFY.

This sequence belongs to the ELO family.

The protein localises to the membrane. The enzyme catalyses an acyl-CoA + malonyl-CoA + H(+) = a 3-oxoacyl-CoA + CO2 + CoA. The protein operates within lipid metabolism; polyunsaturated fatty acid biosynthesis. Functionally, involved in the synthesis of fatty acids. Elongates C20 polyunsaturated fatty acids (PUFAs) with a preference for n-6 PUFAs. The chain is Fatty acid elongase 5 from Leishmania major.